The following is a 406-amino-acid chain: Acetylornithine/succinyldiaminopimelate aminotransferase (406 aa).

Pyridoxal 5'-phosphate contacts are provided by residues glycine 108–threonine 109 and phenylalanine 141. Arginine 144 serves as a coordination point for N(2)-acetyl-L-ornithine. Position 226-229 (aspartate 226–glutamine 229) interacts with pyridoxal 5'-phosphate. Lysine 255 bears the N6-(pyridoxal phosphate)lysine mark. Serine 283 contributes to the N(2)-acetyl-L-ornithine binding site. Residue threonine 284 coordinates pyridoxal 5'-phosphate.

It belongs to the class-III pyridoxal-phosphate-dependent aminotransferase family. ArgD subfamily. As to quaternary structure, homodimer. It depends on pyridoxal 5'-phosphate as a cofactor.

It is found in the cytoplasm. It catalyses the reaction N(2)-acetyl-L-ornithine + 2-oxoglutarate = N-acetyl-L-glutamate 5-semialdehyde + L-glutamate. It carries out the reaction N-succinyl-(2S,6S)-2,6-diaminopimelate + 2-oxoglutarate = (S)-2-succinylamino-6-oxoheptanedioate + L-glutamate. Its pathway is amino-acid biosynthesis; L-arginine biosynthesis; N(2)-acetyl-L-ornithine from L-glutamate: step 4/4. It functions in the pathway amino-acid biosynthesis; L-lysine biosynthesis via DAP pathway; LL-2,6-diaminopimelate from (S)-tetrahydrodipicolinate (succinylase route): step 2/3. Functionally, involved in both the arginine and lysine biosynthetic pathways. The chain is Acetylornithine/succinyldiaminopimelate aminotransferase from Escherichia coli (strain K12).